Here is a 156-residue protein sequence, read N- to C-terminus: Keratin-associated protein 13-4 (156 aa).

4 repeat units span residues 37 to 46 (CQLGSSLYRN), 47 to 56 (CQKTCWEPTS), 57 to 66 (CRKSCYRRRT), and 73 to 82 (CQTTCSRSLG). The tract at residues 37–82 (CQLGSSLYRNCQKTCWEPTSCRKSCYRRRTSMLCSPCQTTCSRSLG) is 4 X 10 AA approximate repeats.

It belongs to the PMG family. As to quaternary structure, interacts with hair keratins.

Its function is as follows. In the hair cortex, hair keratin intermediate filaments are embedded in an interfilamentous matrix, consisting of hair keratin-associated proteins (KRTAP), which are essential for the formation of a rigid and resistant hair shaft through their extensive disulfide bond cross-linking with abundant cysteine residues of hair keratins. The matrix proteins include the high-sulfur and high-glycine-tyrosine keratins. In Macaca fascicularis (Crab-eating macaque), this protein is Keratin-associated protein 13-4 (KRTAP13-4).